Consider the following 608-residue polypeptide: Putative multicopper oxidase GMC1 (608 aa).

Plastocyanin-like domains follow at residues 51 to 163, 243 to 374, and 421 to 548; these read INGY…LIVE, LING…ELYR, and ERTF…FEVP. H100, H102, H145, and H147 together coordinate Cu cation. Positions 452, 455, 457, 530, 531, 532, and 536 each coordinate Cu cation.

Belongs to the multicopper oxidase family. It depends on Cu cation as a cofactor.

In terms of biological role, could be an iron transport multicopper oxidase, which is required for Fe(2+) high affinity uptake. May be required to oxidize Fe(2+) and release it from the transporter. Essential component of copper-dependent iron transport. Involved in meiotic prophase and synaptonemal complex (SC) assembly. This Saccharomyces cerevisiae (strain ATCC 204508 / S288c) (Baker's yeast) protein is Putative multicopper oxidase GMC1 (GMC1).